The chain runs to 416 residues: S-layer protein B (416 aa).

Residues 1–20 form the signal peptide; it reads MKYNLLPLILLSLLVAPLLA. A coiled-coil region spans residues 310–330; sequence IASLNSTIQSLESQISSLSST. The helical transmembrane segment at 392-412 threads the bilayer; it reads IALAVSIIAIIISIVVLILVF.

Belongs to the Sulfolobales SlaB family. The mushroom-shaped unit cells of the Sulfolobales' S-layers may consist of three SlaB subunits and six SlaA subunits.

It is found in the secreted. The protein localises to the cell wall. It localises to the S-layer. The protein resides in the cell membrane. Functionally, S-layer small protein. May anchor the complex to the cell membrane. In Metallosphaera sedula (strain ATCC 51363 / DSM 5348 / JCM 9185 / NBRC 15509 / TH2), this protein is S-layer protein B.